The primary structure comprises 290 residues: Transposon Ty3-I Gag polyprotein (290 aa).

Residue serine 2 is modified to N-acetylserine. Residues 265–282 (RLCFYCKKEGHRLNECRA) form a CCHC-type zinc finger.

The protein localises to the cytoplasm. Its function is as follows. Capsid protein (CA) is the structural component of the virus-like particle (VLP), forming the shell that encapsulates the retrotransposons dimeric RNA genome. In terms of biological role, nucleocapsid protein p9 (NC) forms the nucleocore that coats the retro-elements dimeric RNA. Binds these RNAs through its zinc fingers. Promotes primer tRNA(i)-Met annealing to the multipartite primer-binding site (PBS), dimerization of Ty3 RNA and initiation of reverse transcription. This is Transposon Ty3-I Gag polyprotein (TY3A-I) from Saccharomyces cerevisiae (strain ATCC 204508 / S288c) (Baker's yeast).